The primary structure comprises 204 residues: Octanoyltransferase (204 aa).

Positions 27–202 (QGGEEALLLL…RFQPLLNLHL (176 aa)) constitute a BPL/LPL catalytic domain. Substrate is bound by residues 65 to 72 (RGGDVTYH), 132 to 134 (SIG), and 145 to 147 (GFA). C163 functions as the Acyl-thioester intermediate in the catalytic mechanism.

It belongs to the LipB family.

Its subcellular location is the cytoplasm. The enzyme catalyses octanoyl-[ACP] + L-lysyl-[protein] = N(6)-octanoyl-L-lysyl-[protein] + holo-[ACP] + H(+). The protein operates within protein modification; protein lipoylation via endogenous pathway; protein N(6)-(lipoyl)lysine from octanoyl-[acyl-carrier-protein]: step 1/2. Its function is as follows. Catalyzes the transfer of endogenously produced octanoic acid from octanoyl-acyl-carrier-protein onto the lipoyl domains of lipoate-dependent enzymes. Lipoyl-ACP can also act as a substrate although octanoyl-ACP is likely to be the physiological substrate. The sequence is that of Octanoyltransferase from Citrifermentans bemidjiense (strain ATCC BAA-1014 / DSM 16622 / JCM 12645 / Bem) (Geobacter bemidjiensis).